Here is a 264-residue protein sequence, read N- to C-terminus: Putative serine carboxypeptidase-like 53 (264 aa).

Positions 1–23 are cleaved as a signal peptide; that stretch reads MGKLQDWSITTCLFLFFLHASQT. N-linked (GlcNAc...) asparagine glycans are attached at residues Asn65, Asn101, Asn153, and Asn184.

Belongs to the peptidase S10 family.

The protein resides in the secreted. The polypeptide is Putative serine carboxypeptidase-like 53 (SCPL53) (Arabidopsis thaliana (Mouse-ear cress)).